Here is a 1073-residue protein sequence, read N- to C-terminus: MGHFVVQGDLPWILCSLRLVIMIIAGKVSPTSSDALFSVPVPSATSSPPEVYLPATFKLSNTQLAFFLQENRAPSYGSQRGHPLQRSESFVVFQTKELPAVNISLGPFTQDQTLSKDLLQPSSPLDIPGRLTVNWKVRAFIVQSRVYASNPLVQVLFYIAGRDWDDFKIQDKLPCVRLHAFRDVREIKTSCRLQGNLAQCLAQLDLPSTWFNVNVAPLGRRKSSGTDGLELTGETLQVELYYTLHDPDSNDECGESYPRRGGPSRGESLSQQPLLRIGSISLYQPSQEQLVVDKQLDKNLFLRLPERPLKPGETLNIYLLLVPNSTVEQFTLKVKAKKGVNLLSTKSRSNQWRVEWDMQSGAKHSIATVEASKIKGVSGDMAGSIEIMQLDFEMENFTSQSVTRRINWNIDYRGQNPTSDAEKVVTELTVVQKDIQAIIPLSMDTEIINTAVLTGRTVAIPVKVVSIELNGAVTDVSSSVQCKSFNEDIVKVSMNCDYVFVNGKETRGSMNARVIFSYEHLSAPLELTVWVPKLPLKVELSDNRLSFIKGWRVPILPDRRTARDSDDDDDDDRKVSRGCTLQYQRAQIKVLTQFHTTSSEGTNQMITMLGPDWQVDVTELVQDSLKVVDGRVAELADRTVLVANELGSSTLKVESPLAVEAVLGETQFSVVDEKVSIVELRVHAISGLALNLQPSPGNSHTMVAKATGLQTLSTLKQEASFSIWVYYSDNTAAPLSMYDPKDYNLNGTSADDKVVTVAQQPQQRWPVIIAEGEGTGDIVHVEMTISETCQKTKRKSVIASSSVFVKVRFGTDEDSEEDMEMETEIDTRMPANTRRPAIDSNVGGAGYEPSNEQPASVPIDYTNFPTISNPEEPTEEDEEDDEFVHSPRSMTDLEIGMYALLGVFCLAILVFLINCIVFVLKYRHKRIPPEGQANMDHSHHWVFLGNGEPLRTQSDLSPQTVESPSNTLEGVQTCCHGDHHSSGSSQTSVQSQVHGRGDGSSGGSTKDHGEDASSPTSKRKRVKFTTFTLPTEDLPYNSIPIANEEDIQWVCQDMGFQDQEELHDYMRRIKEIA.

The signal sequence occupies residues 1-33; that stretch reads MGHFVVQGDLPWILCSLRLVIMIIAGKVSPTSS. Residues 34 to 899 are Extracellular-facing; it reads DALFSVPVPS…MTDLEIGMYA (866 aa). Asparagine 102 is a glycosylation site (N-linked (GlcNAc...) asparagine). The interval 246-270 is disordered; it reads DPDSNDECGESYPRRGGPSRGESLS. Residues asparagine 324, asparagine 396, and asparagine 746 are each glycosylated (N-linked (GlcNAc...) asparagine). Residues 900-920 form a helical membrane-spanning segment; it reads LLGVFCLAILVFLINCIVFVL. Residues 921–1073 lie on the Cytoplasmic side of the membrane; sequence KYRHKRIPPE…DYMRRIKEIA (153 aa). Positions 952–970 are enriched in polar residues; sequence TQSDLSPQTVESPSNTLEG. Residues 952-1024 form a disordered region; the sequence is TQSDLSPQTV…PTSKRKRVKF (73 aa). Residues 982–994 are compositionally biased toward low complexity; sequence SGSSQTSVQSQVH.

The protein belongs to the TMEM132 family.

The protein resides in the membrane. Its function is as follows. Required for normal inner ear hair cell function and hearing. The sequence is that of Transmembrane protein 132E (tmem132e) from Danio rerio (Zebrafish).